We begin with the raw amino-acid sequence, 157 residues long: SsrA-binding protein (157 aa).

A disordered region spans residues 133–157 (LHDKRESEKKRDWGREKGRLLRARG). The span at 135-151 (DKRESEKKRDWGREKGR) shows a compositional bias: basic and acidic residues.

Belongs to the SmpB family.

The protein localises to the cytoplasm. Functionally, required for rescue of stalled ribosomes mediated by trans-translation. Binds to transfer-messenger RNA (tmRNA), required for stable association of tmRNA with ribosomes. tmRNA and SmpB together mimic tRNA shape, replacing the anticodon stem-loop with SmpB. tmRNA is encoded by the ssrA gene; the 2 termini fold to resemble tRNA(Ala) and it encodes a 'tag peptide', a short internal open reading frame. During trans-translation Ala-aminoacylated tmRNA acts like a tRNA, entering the A-site of stalled ribosomes, displacing the stalled mRNA. The ribosome then switches to translate the ORF on the tmRNA; the nascent peptide is terminated with the 'tag peptide' encoded by the tmRNA and targeted for degradation. The ribosome is freed to recommence translation, which seems to be the essential function of trans-translation. This chain is SsrA-binding protein, found in Bradyrhizobium sp. (strain ORS 278).